The following is a 520-amino-acid chain: Zinc finger and BTB domain-containing protein 18 (520 aa).

One can recognise a BTB domain in the interval 24–91 (CDCTVLVGDA…MYEGILQFKG (68 aa)). The interval 121–140 (ATTDSTKKEEDTSSFSDKVE) is disordered. 4 C2H2-type zinc fingers span residues 368-390 (FMCPLCNKVFPSPHILQIHLSTH), 408-430 (PTCSLCGKTFSCMYTLKRHERTH), 436-458 (YTCTQCGKSFQYSHNLSRHAVVH), and 464-487 (HACKWCERRFTQSGDLYRHIRKFH).

This sequence belongs to the krueppel C2H2-type zinc-finger protein family. ZBTB18 subfamily.

The protein resides in the nucleus. In terms of biological role, transcriptional repressor that plays a role in various developmental processes. Specifically binds the consensus DNA sequence 5'-[AC]ACATCTG[GT][AC]-3' which contains the E box core, and acts by recruiting chromatin remodeling multiprotein complexes. The polypeptide is Zinc finger and BTB domain-containing protein 18 (zbtb18) (Xenopus laevis (African clawed frog)).